The sequence spans 462 residues: Putative F-box protein At1g12855 (462 aa).

The segment covering 1–22 (MESREDSFISKEKKSTMKKEKQ) has biased composition (basic and acidic residues). Residues 1 to 59 (MESREDSFISKEKKSTMKKEKQAIASQRNRRRVIKNRGNGKRLIASLSQRKRRRIPRGR) form a disordered region. The span at 28 to 40 (RNRRRVIKNRGNG) shows a compositional bias: basic residues. Positions 65-110 (VFAPSSLPNDVVEEIFLRLPVKAIIQLKSLSKQWRSTIESRSFEER) constitute an F-box domain.

This Arabidopsis thaliana (Mouse-ear cress) protein is Putative F-box protein At1g12855.